The primary structure comprises 132 residues: 3-aminoacrylate deaminase RutC (132 aa).

Belongs to the RutC family.

It catalyses the reaction (Z)-3-aminoacrylate + H2O + H(+) = 3-oxopropanoate + NH4(+). Functionally, involved in pyrimidine catabolism. Catalyzes the deamination of 3-aminoacrylate to malonic semialdehyde, a reaction that can also occur spontaneously. RutC may facilitate the reaction and modulate the metabolic fitness, rather than catalyzing essential functions. This Cronobacter turicensis (strain DSM 18703 / CCUG 55852 / LMG 23827 / z3032) protein is 3-aminoacrylate deaminase RutC.